The following is a 101-amino-acid chain: Small ribosomal subunit protein uS14A (101 aa).

The tract at residues 31-69 (IAAPGSSPEERAAAQQELRRQPRDASATRLRNRDAVDGR) is disordered. Positions 38-53 (PEERAAAQQELRRQPR) are enriched in basic and acidic residues.

The protein belongs to the universal ribosomal protein uS14 family. Part of the 30S ribosomal subunit. Contacts proteins S3 and S10.

Functionally, binds 16S rRNA, required for the assembly of 30S particles and may also be responsible for determining the conformation of the 16S rRNA at the A site. The chain is Small ribosomal subunit protein uS14A from Saccharopolyspora erythraea (strain ATCC 11635 / DSM 40517 / JCM 4748 / NBRC 13426 / NCIMB 8594 / NRRL 2338).